Consider the following 417-residue polypeptide: Tyrosine--tRNA ligase (417 aa).

Tyr-34 contributes to the L-tyrosine binding site. The short motif at 39-48 (PSGDSLHIGH) is the 'HIGH' region element. Positions 165 and 169 each coordinate L-tyrosine. The short motif at 227-231 (KFGKT) is the 'KMSKS' region element. Lys-230 serves as a coordination point for ATP. An S4 RNA-binding domain is found at 349-415 (ANIVDWLVDT…GKKNYTLAKV (67 aa)).

Belongs to the class-I aminoacyl-tRNA synthetase family. TyrS type 1 subfamily. As to quaternary structure, homodimer.

The protein localises to the cytoplasm. It carries out the reaction tRNA(Tyr) + L-tyrosine + ATP = L-tyrosyl-tRNA(Tyr) + AMP + diphosphate + H(+). Its function is as follows. Catalyzes the attachment of tyrosine to tRNA(Tyr) in a two-step reaction: tyrosine is first activated by ATP to form Tyr-AMP and then transferred to the acceptor end of tRNA(Tyr). The polypeptide is Tyrosine--tRNA ligase (Limosilactobacillus fermentum (strain NBRC 3956 / LMG 18251) (Lactobacillus fermentum)).